Reading from the N-terminus, the 329-residue chain is MQGKIALEEHFAIPETLNDSAGFVPGTYWDELQARLLDIQDVRLKLMDEHNIETMILSLNAPAVQAIPERERAIDIARRANDVLAEECAKRPDRFRGFAALPLQDPDAAAEELRRCVTELGFVGALVNGFSQSATVDGGSTPLYYDLPRYRPFWAEVERLDVPFYLHPRNPLNQDARIYEGHPWLLGPTWAFAQETAVHALRLMASGLFDEHPGLRIVLGHMGEGIPAMLWRIDHRNAWVDVPPAYPAKRRMVDYFTENFFVTTSGNFRTQTLIDLLLELGSERVMFSTDWPFENINHAAEWFDAASISEADRLKIGRTNAATLFKLDR.

Zn(2+) is bound by residues glutamate 8, histidine 10, histidine 167, and aspartate 290. The active site involves aspartate 290.

The protein belongs to the metallo-dependent hydrolases superfamily. ACMSD family. The cofactor is Zn(2+).

It carries out the reaction 2,6-dihydroxybenzoate + H(+) = resorcinol + CO2. It participates in aromatic compound metabolism. In terms of biological role, involved in the gamma-resorcylate (2,6-dihydroxybenzoate) catabolism. Catalyzes the reversible decarboxylation of gamma-resorcylate to resorcinol. The protein is Gamma-resorcylate decarboxylase of Rhodococcus jostii (strain RHA1).